The following is a 579-amino-acid chain: Putative laccase-9 (579 aa).

The signal sequence occupies residues 1-27 (MGTAKLPALLWLLAGVVLALAVNPAHG). Plastocyanin-like domains are found at residues 36–152 (FITE…PKRG) and 162–319 (KEIP…YTDS). N-linked (GlcNAc...) asparagine glycosylation is found at asparagine 41 and asparagine 82. 2 residues coordinate Cu cation: histidine 86 and histidine 88. An N-linked (GlcNAc...) asparagine glycan is attached at asparagine 114. Cu cation contacts are provided by histidine 131 and histidine 133. Residues asparagine 307, asparagine 405, and asparagine 446 are each glycosylated (N-linked (GlcNAc...) asparagine). Positions 436-563 (PTAFVDPPVN…DTVFIVKDGK (128 aa)) constitute a Plastocyanin-like 3 domain. The Cu cation site is built by histidine 480, histidine 483, and histidine 485. Asparagine 496 carries an N-linked (GlcNAc...) asparagine glycan. Cu cation is bound by residues histidine 542, cysteine 543, histidine 544, histidine 548, and methionine 553.

The protein belongs to the multicopper oxidase family. It depends on Cu cation as a cofactor.

The protein resides in the secreted. It is found in the extracellular space. It localises to the apoplast. It carries out the reaction 4 hydroquinone + O2 = 4 benzosemiquinone + 2 H2O. In terms of biological role, lignin degradation and detoxification of lignin-derived products. This chain is Putative laccase-9 (LAC9), found in Oryza sativa subsp. japonica (Rice).